The sequence spans 194 residues: Ribonuclease HII (194 aa).

The RNase H type-2 domain maps to 3–193; sequence ILTAGVDEAG…VRNLLAQQTL (191 aa). Positions 9, 10, and 101 each coordinate a divalent metal cation.

It belongs to the RNase HII family. Mn(2+) is required as a cofactor. The cofactor is Mg(2+).

The protein resides in the cytoplasm. The enzyme catalyses Endonucleolytic cleavage to 5'-phosphomonoester.. In terms of biological role, endonuclease that specifically degrades the RNA of RNA-DNA hybrids. The protein is Ribonuclease HII of Neisseria meningitidis serogroup C (strain 053442).